Reading from the N-terminus, the 340-residue chain is Uridine nucleosidase (340 aa).

Residue histidine 254 is part of the active site.

Belongs to the IUNH family.

It localises to the cytoplasm. The protein localises to the nucleus. It catalyses the reaction uridine + H2O = D-ribose + uracil. Its function is as follows. Also acts on cytidine. This chain is Uridine nucleosidase (URH1), found in Saccharomyces cerevisiae (strain ATCC 204508 / S288c) (Baker's yeast).